We begin with the raw amino-acid sequence, 448 residues long: tRNA-2-methylthio-N(6)-dimethylallyladenosine synthase (448 aa).

In terms of domain architecture, MTTase N-terminal spans 7–123 (RSFYIHTFGC…LPALIGDAEE (117 aa)). The [4Fe-4S] cluster site is built by Cys16, Cys52, Cys86, Cys159, Cys163, and Cys166. In terms of domain architecture, Radical SAM core spans 145 to 375 (REVGVGAFVP…IDLQLSISAE (231 aa)). In terms of domain architecture, TRAM spans 378–441 (QEAVGSVVDV…SATLTGVNQG (64 aa)).

This sequence belongs to the methylthiotransferase family. MiaB subfamily. In terms of assembly, monomer. [4Fe-4S] cluster serves as cofactor.

The protein resides in the cytoplasm. The catalysed reaction is N(6)-dimethylallyladenosine(37) in tRNA + (sulfur carrier)-SH + AH2 + 2 S-adenosyl-L-methionine = 2-methylsulfanyl-N(6)-dimethylallyladenosine(37) in tRNA + (sulfur carrier)-H + 5'-deoxyadenosine + L-methionine + A + S-adenosyl-L-homocysteine + 2 H(+). Functionally, catalyzes the methylthiolation of N6-(dimethylallyl)adenosine (i(6)A), leading to the formation of 2-methylthio-N6-(dimethylallyl)adenosine (ms(2)i(6)A) at position 37 in tRNAs that read codons beginning with uridine. In Chlorobium phaeovibrioides (strain DSM 265 / 1930) (Prosthecochloris vibrioformis (strain DSM 265)), this protein is tRNA-2-methylthio-N(6)-dimethylallyladenosine synthase.